A 203-amino-acid polypeptide reads, in one-letter code: Small ribosomal subunit protein uS4 (203 aa).

In terms of domain architecture, S4 RNA-binding spans 93-153 (QRLDSVVYRL…EKSKNILPIQ (61 aa)).

Belongs to the universal ribosomal protein uS4 family. In terms of assembly, part of the 30S ribosomal subunit. Contacts protein S5. The interaction surface between S4 and S5 is involved in control of translational fidelity.

Functionally, one of the primary rRNA binding proteins, it binds directly to 16S rRNA where it nucleates assembly of the body of the 30S subunit. Its function is as follows. With S5 and S12 plays an important role in translational accuracy. This chain is Small ribosomal subunit protein uS4, found in Leuconostoc mesenteroides subsp. mesenteroides (strain ATCC 8293 / DSM 20343 / BCRC 11652 / CCM 1803 / JCM 6124 / NCDO 523 / NBRC 100496 / NCIMB 8023 / NCTC 12954 / NRRL B-1118 / 37Y).